The following is a 628-amino-acid chain: Kinesin-like protein subito (628 aa).

The tract at residues 28 to 68 (RFRPRPNKKMRLFDNIQESEEESFSEYSDTESEYKYQSSEA) is disordered. Positions 44–58 (QESEEESFSEYSDTE) are enriched in acidic residues. Residues 87-479 (GPQVFLRLRP…LNFASIAKNI (393 aa)) form the Kinesin motor domain. Residue 169–176 (GTSGSGKT) participates in ATP binding. Residues 509–612 (DYTKELEDEN…KNPASDTDIS (104 aa)) adopt a coiled-coil conformation. Residues 596–628 (KDEIEELKNPASDTDISDDPNESKSPIEILDDD) are disordered. Ser607 is modified (phosphoserine). Thr609 carries the phosphothreonine modification. Ser612 is subject to Phosphoserine.

This sequence belongs to the TRAFAC class myosin-kinesin ATPase superfamily. Kinesin family.

The protein resides in the cytoplasm. Its subcellular location is the cytoskeleton. In terms of biological role, required during female meiosis for bipolar spindle formation in the absence of the centrosomes and chromosome homolog segregation. Also has roles in male meiosis and mitotic divisions of the early embryo. In Drosophila melanogaster (Fruit fly), this protein is Kinesin-like protein subito (sub).